The sequence spans 72 residues: NAD(P)H-quinone oxidoreductase subunit O (72 aa).

It belongs to the complex I NdhO subunit family. As to quaternary structure, NDH-1 can be composed of about 15 different subunits; different subcomplexes with different compositions have been identified which probably have different functions.

It localises to the cellular thylakoid membrane. The catalysed reaction is a plastoquinone + NADH + (n+1) H(+)(in) = a plastoquinol + NAD(+) + n H(+)(out). The enzyme catalyses a plastoquinone + NADPH + (n+1) H(+)(in) = a plastoquinol + NADP(+) + n H(+)(out). In terms of biological role, NDH-1 shuttles electrons from an unknown electron donor, via FMN and iron-sulfur (Fe-S) centers, to quinones in the respiratory and/or the photosynthetic chain. The immediate electron acceptor for the enzyme in this species is believed to be plastoquinone. Couples the redox reaction to proton translocation, and thus conserves the redox energy in a proton gradient. Cyanobacterial NDH-1 also plays a role in inorganic carbon-concentration. The chain is NAD(P)H-quinone oxidoreductase subunit O from Synechococcus sp. (strain JA-3-3Ab) (Cyanobacteria bacterium Yellowstone A-Prime).